The primary structure comprises 2053 residues: Integrator complex subunit 1 (2053 aa).

2 disordered regions span residues 36–58 (KILP…ALAS) and 249–285 (SLPS…ESEP). The segment covering 268–283 (DNSTQSLDASPLNTES) has biased composition (polar residues). The helical transmembrane segment at 708 to 728 (LAIIAFYWKAWLILLMISAHN) threads the bilayer.

Belongs to the Integrator subunit 1 family. As to quaternary structure, belongs to the multiprotein complex Integrator, at least composed of IntS1, IntS2, IntS3, IntS4, omd/IntS5, IntS6, defl/IntS7, IntS8, IntS9, IntS10, IntS11, IntS12, asun/IntS13, IntS14 and IntS15. The core complex associates with protein phosphatase 2A subunits mts/PP2A and Pp2A-29B, to form the Integrator-PP2A (INTAC) complex. Within the complex, interacts with IntS12 and IntS9. Interaction with IntS12 is likely to be important for promoting 3'-end processing of snRNAs. Interacts with Mediator complex members Cdk8 and CycC.

The protein localises to the nucleus membrane. It is found in the nucleus. Component of the integrator complex, a multiprotein complex that terminates RNA polymerase II (Pol II) transcription in the promoter-proximal region of genes. The integrator complex provides a quality checkpoint during transcription elongation by driving premature transcription termination of transcripts that are unfavorably configured for transcriptional elongation: the complex terminates transcription by (1) catalyzing dephosphorylation of the C-terminal domain (CTD) of Pol II subunit Polr2A/Rbp1 and Spt5, and (2) degrading the exiting nascent RNA transcript via endonuclease activity. The integrator complex is also involved in the 3'-end processing of the U7 snRNA, and also the spliceosomal snRNAs U1, U2, U4 and U5. Required for the normal expression of the Integrator complex component IntS12. This is Integrator complex subunit 1 from Drosophila melanogaster (Fruit fly).